The sequence spans 422 residues: Methylaspartate ammonia-lyase (422 aa).

Position 175 (Gln-175) interacts with (2S,3S)-3-methyl-L-aspartate. 3 residues coordinate Mg(2+): Asp-239, Glu-276, and Asp-310. Gln-332 is a binding site for (2S,3S)-3-methyl-L-aspartate. Lys-334 acts as the Proton acceptor in catalysis. 363-364 (TC) is a (2S,3S)-3-methyl-L-aspartate binding site.

This sequence belongs to the methylaspartate ammonia-lyase family. Homodimer. The cofactor is Mg(2+).

It carries out the reaction (2S,3S)-3-methyl-L-aspartate = mesaconate + NH4(+). It functions in the pathway amino-acid degradation; L-glutamate degradation via mesaconate pathway; acetate and pyruvate from L-glutamate: step 2/4. Functionally, involved in the methylaspartate cycle. Catalyzes the formation of the alpha,beta-unsaturated bond by the reversible anti elimination of ammonia from L-threo-beta-methylaspartate (L-threo-(2S,3S)-3-methylaspartate) to give mesaconate. The chain is Methylaspartate ammonia-lyase (mal) from Haloarcula marismortui (strain ATCC 43049 / DSM 3752 / JCM 8966 / VKM B-1809) (Halobacterium marismortui).